The chain runs to 833 residues: A disintegrin and metalloproteinase with thrombospondin motifs 4 (833 aa).

The N-terminal stretch at 1 to 49 is a signal peptide; sequence MSQMGLHPRRGLTGHWLQRFQPCLPLHTVQWRRLLLLAFLLSLAWPASP. Residues 50–208 constitute a propeptide that is removed on maturation; it reads LPREEEIVFP…PSPISRRTKR (159 aa). Residue Asn-63 is glycosylated (N-linked (GlcNAc...) asparagine). Residues 180–204 are disordered; sequence KSPASSQGPMCTVKAPSGSPSPISR. A Cysteine switch motif is present at residues 188–195; that stretch reads PMCTVKAP. Cys-190 contributes to the Zn(2+) binding site. Residues 214–424 enclose the Peptidase M12B domain; sequence RFVETLVVAD…GYGHCLLDKP (211 aa). Disulfide bonds link Cys-289–Cys-341, Cys-318–Cys-323, Cys-335–Cys-419, Cys-373–Cys-403, Cys-445–Cys-468, Cys-456–Cys-478, Cys-463–Cys-497, Cys-491–Cys-502, Cys-528–Cys-565, Cys-532–Cys-570, and Cys-543–Cys-555. Asn-299 carries N-linked (GlcNAc...) asparagine glycosylation. Position 357 (His-357) interacts with Zn(2+). The active site involves Glu-358. His-361 and His-367 together coordinate Zn(2+). Positions 433-515 constitute a Disintegrin domain; that stretch reads TFPGKDYDAD…DQLKDFNVPQ (83 aa). One can recognise a TSP type-1 domain in the interval 516-571; sequence AGGWGPWGPWGDCSRTCGGGVQFSSRDCTRPVPRNGGKYCEGRRTRFRSCNTENCP. The tract at residues 682 to 833 is spacer; the sequence is SKQSGSFKKF…LRKRPWAGRK (152 aa).

Interacts with SRPX2. The cofactor is Zn(2+). In terms of processing, the precursor is cleaved by a furin endopeptidase. Glycosylated. Can be O-fucosylated by POFUT2 on a serine or a threonine residue found within the consensus sequence C1-X(2)-(S/T)-C2-G of the TSP type-1 repeat domains where C1 and C2 are the first and second cysteine residue of the repeat, respectively. Fucosylated repeats can then be further glycosylated by the addition of a beta-1,3-glucose residue by the glucosyltransferase, B3GALTL. Fucosylation mediates the efficient secretion of ADAMTS family members. Can also be C-glycosylated with one or two mannose molecules on tryptophan residues within the consensus sequence W-X-X-W of the TPRs, and N-glycosylated. These other glycosylations can also facilitate secretion.

The protein resides in the secreted. Its subcellular location is the extracellular space. It localises to the extracellular matrix. It carries out the reaction Glutamyl endopeptidase. Bonds cleaved include 370-Thr-Glu-Gly-Glu-|-Ala-Arg-Gly-Ser-377 in the interglobular domain of mammalian aggrecan.. Cleaves aggrecan, a cartilage proteoglycan, at the '392-Glu-|-Ala-393' site and may be involved in its turnover. Also cleaves COMP. May play an important role in the destruction of aggrecan in arthritic diseases. The sequence is that of A disintegrin and metalloproteinase with thrombospondin motifs 4 (Adamts4) from Mus musculus (Mouse).